The following is a 252-amino-acid chain: Phosphate import ATP-binding protein PstB 1 (252 aa).

The ABC transporter domain maps to leucine 6–isoleucine 247. Glycine 38–serine 45 contributes to the ATP binding site.

It belongs to the ABC transporter superfamily. Phosphate importer (TC 3.A.1.7) family. In terms of assembly, the complex is composed of two ATP-binding proteins (PstB), two transmembrane proteins (PstC and PstA) and a solute-binding protein (PstS).

The protein localises to the cell membrane. It catalyses the reaction phosphate(out) + ATP + H2O = ADP + 2 phosphate(in) + H(+). Functionally, part of the ABC transporter complex PstSACB involved in phosphate import. Responsible for energy coupling to the transport system. This Streptococcus pyogenes serotype M1 protein is Phosphate import ATP-binding protein PstB 1.